The following is a 333-amino-acid chain: Cytochrome f (333 aa).

Positions 1–37 (MRNSCKKARRTRPLKATIQALLVAIATMTFFFTSDIA) are cleaved as a signal peptide. The Cytoplasmic portion of the chain corresponds to 38 to 298 (LPQSAAAYPF…TEIVLQDPNR (261 aa)). 4 residues coordinate heme: Tyr-45, Cys-66, Cys-69, and His-70. Residues 299–319 (VKWMIAFICLVMLAQLMLILK) traverse the membrane as a helical segment. Over 320–333 (KKQVEKVQAAEMNF) the chain is Lumenal, thylakoid.

This sequence belongs to the cytochrome f family. The 4 large subunits of the cytochrome b6-f complex are cytochrome b6, subunit IV (17 kDa polypeptide, PetD), cytochrome f and the Rieske protein, while the 4 small subunits are PetG, PetL, PetM and PetN. The complex functions as a dimer. Heme is required as a cofactor.

The protein localises to the cellular thylakoid membrane. Its function is as follows. Component of the cytochrome b6-f complex, which mediates electron transfer between photosystem II (PSII) and photosystem I (PSI), cyclic electron flow around PSI, and state transitions. This Mastigocladus laminosus (Fischerella sp.) protein is Cytochrome f (petA).